The following is an 80-amino-acid chain: Protein UL148A (80 aa).

Residues 10 to 30 (WIPVCVVVVMTSVVLFAGLHV) traverse the membrane as a helical segment.

Its subcellular location is the host membrane. Plays a role in the down-regulation of the host NKG2D ligand MICA by utilizing the lysosomal pathway for its degradation. In turn, MICA reduction diminishes NK-cell killing of HCMV-infected cells. The sequence is that of Protein UL148A (UL148A) from Human cytomegalovirus (strain Merlin) (HHV-5).